The following is a 643-amino-acid chain: Type VI secretion system spike protein VgrG1a (643 aa).

This sequence belongs to the VgrG protein family. In terms of assembly, forms homotrimers. Part of the type VI secretion system (T6SS). Interacts with EagT6 and Tse6; these interactions are required for Tse6 loading onto VgrG1. Interacts with Hcp1.

It localises to the secreted. In terms of biological role, part of the H1 type VI secretion system (H1-T6SS) specialized secretion system, which delivers several virulence factors in both prokaryotic and eukaryotic cells during infection. Forms the spike at the tip of the elongating tube formed by haemolysin co-regulated protein 1/Hcp1. Allows the delivery of the Tse6 toxin to target cells where it exerts its toxicity. The sequence is that of Type VI secretion system spike protein VgrG1a from Pseudomonas aeruginosa (strain ATCC 15692 / DSM 22644 / CIP 104116 / JCM 14847 / LMG 12228 / 1C / PRS 101 / PAO1).